The following is a 356-amino-acid chain: Protein-glutamate methylesterase/protein-glutamine glutaminase 3 (356 aa).

Positions 3–120 constitute a Response regulatory domain; sequence KVAIVDDSAV…KGFLEESQAR (118 aa). Asp54 is subject to 4-aspartylphosphate. A CheB-type methylesterase domain is found at 165-356; that stretch reads NQTTDRVVAL…AEEIIAFTKQ (192 aa). Active-site residues include Ser177, His203, and Asp299.

It belongs to the CheB family. Post-translationally, phosphorylated by CheA. Phosphorylation of the N-terminal regulatory domain activates the methylesterase activity.

The protein resides in the cytoplasm. It carries out the reaction [protein]-L-glutamate 5-O-methyl ester + H2O = L-glutamyl-[protein] + methanol + H(+). The catalysed reaction is L-glutaminyl-[protein] + H2O = L-glutamyl-[protein] + NH4(+). Its function is as follows. Involved in chemotaxis. Part of a chemotaxis signal transduction system that modulates chemotaxis in response to various stimuli. Catalyzes the demethylation of specific methylglutamate residues introduced into the chemoreceptors (methyl-accepting chemotaxis proteins or MCP) by CheR. Also mediates the irreversible deamidation of specific glutamine residues to glutamic acid. The protein is Protein-glutamate methylesterase/protein-glutamine glutaminase 3 of Shewanella oneidensis (strain ATCC 700550 / JCM 31522 / CIP 106686 / LMG 19005 / NCIMB 14063 / MR-1).